The following is a 48-amino-acid chain: Large ribosomal subunit protein bL32 (48 aa).

The span at 1 to 20 (MAVPKRRVSKTRAAKRRTHY) shows a compositional bias: basic residues. The disordered stretch occupies residues 1–48 (MAVPKRRVSKTRAAKRRTHYKVSLPIPVKDKDGSWKLPHRINTKTGEY).

Belongs to the bacterial ribosomal protein bL32 family.

The protein is Large ribosomal subunit protein bL32 of Campylobacter hominis (strain ATCC BAA-381 / DSM 21671 / CCUG 45161 / LMG 19568 / NCTC 13146 / CH001A).